A 215-amino-acid chain; its full sequence is Histidine biosynthesis bifunctional protein HisIE (215 aa).

The segment at 1–114 (MLKKHDLLNL…FISNKYNINF (114 aa)) is phosphoribosyl-AMP cyclohydrolase. Residues 115 to 215 (LFKLEEIIEE…LNTNSEKLLK (101 aa)) form a phosphoribosyl-ATP pyrophosphohydrolase region.

It in the N-terminal section; belongs to the PRA-CH family. In the C-terminal section; belongs to the PRA-PH family.

It localises to the cytoplasm. The catalysed reaction is 1-(5-phospho-beta-D-ribosyl)-ATP + H2O = 1-(5-phospho-beta-D-ribosyl)-5'-AMP + diphosphate + H(+). It carries out the reaction 1-(5-phospho-beta-D-ribosyl)-5'-AMP + H2O = 1-(5-phospho-beta-D-ribosyl)-5-[(5-phospho-beta-D-ribosylamino)methylideneamino]imidazole-4-carboxamide. The protein operates within amino-acid biosynthesis; L-histidine biosynthesis; L-histidine from 5-phospho-alpha-D-ribose 1-diphosphate: step 2/9. It functions in the pathway amino-acid biosynthesis; L-histidine biosynthesis; L-histidine from 5-phospho-alpha-D-ribose 1-diphosphate: step 3/9. The polypeptide is Histidine biosynthesis bifunctional protein HisIE (hisI) (Buchnera aphidicola subsp. Acyrthosiphon pisum (strain APS) (Acyrthosiphon pisum symbiotic bacterium)).